Reading from the N-terminus, the 387-residue chain is Cytochrome b (387 aa).

4 helical membrane passes run 32–52 (FGSLLLLCLIIQIITGVTLAM), 76–98 (WLVRYLHSNTASAFFFLVYLHIG), 113–133 (VWAIGTVILIVMIVTAFLGYV), and 179–199 (FFALHYLLPFILVALVLMHLI). Residues His-82 and His-96 each coordinate heme b. Heme b contacts are provided by His-183 and His-197. His-202 contacts a ubiquinone. 4 consecutive transmembrane segments (helical) span residues 226–246 (YLFKDLITIFIFIFVLSSFVF), 290–310 (LLGVIAMFAAILAIMLLPITD), 322–342 (LSKFAFWVFVVNFLILMKLGA), and 349–369 (FIELGQLSTALYFGHFIIIVP).

This sequence belongs to the cytochrome b family. Fungal cytochrome b-c1 complex contains 10 subunits; 3 respiratory subunits, 2 core proteins and 5 low-molecular weight proteins. Cytochrome b-c1 complex is a homodimer. The cofactor is heme b.

It localises to the mitochondrion inner membrane. Its function is as follows. Component of the ubiquinol-cytochrome c reductase complex (complex III or cytochrome b-c1 complex) that is part of the mitochondrial respiratory chain. The b-c1 complex mediates electron transfer from ubiquinol to cytochrome c. Contributes to the generation of a proton gradient across the mitochondrial membrane that is then used for ATP synthesis. This chain is Cytochrome b (COB), found in Podospora anserina (strain S / ATCC MYA-4624 / DSM 980 / FGSC 10383) (Pleurage anserina).